Consider the following 222-residue polypeptide: GTP cyclohydrolase 1 (222 aa).

Residues Cys-111, His-114, and Cys-182 each coordinate Zn(2+).

The protein belongs to the GTP cyclohydrolase I family. In terms of assembly, homomer.

It carries out the reaction GTP + H2O = 7,8-dihydroneopterin 3'-triphosphate + formate + H(+). Its pathway is cofactor biosynthesis; 7,8-dihydroneopterin triphosphate biosynthesis; 7,8-dihydroneopterin triphosphate from GTP: step 1/1. This chain is GTP cyclohydrolase 1, found in Shigella boydii serotype 18 (strain CDC 3083-94 / BS512).